We begin with the raw amino-acid sequence, 306 residues long: Protein farnesyltransferase/geranylgeranyltransferase type-1 subunit alpha (306 aa).

5 PFTA repeats span residues 48 to 82 (YSER…NLPN), 84 to 118 (NLYD…QIME), 125 to 159 (DPYR…TFDL), 161 to 195 (NDAK…SKKH), and 201 to 235 (TIDE…RFDR).

The protein belongs to the protein prenyltransferase subunit alpha family. Heterodimer of an alpha and a beta subunit. It depends on Mg(2+) as a cofactor.

It catalyses the reaction L-cysteinyl-[protein] + (2E,6E)-farnesyl diphosphate = S-(2E,6E)-farnesyl-L-cysteinyl-[protein] + diphosphate. The enzyme catalyses geranylgeranyl diphosphate + L-cysteinyl-[protein] = S-geranylgeranyl-L-cysteinyl-[protein] + diphosphate. Essential subunit of both the farnesyltransferase and the geranylgeranyltransferase complex. Contributes to the transfer of a farnesyl or geranylgeranyl moiety from farnesyl or geranylgeranyl diphosphate to a cysteine at the fourth position from the C-terminus of several proteins having the C-terminal sequence Cys-aliphatic-aliphatic-X. The protein is Protein farnesyltransferase/geranylgeranyltransferase type-1 subunit alpha (RAM2) of Candida albicans (Yeast).